Reading from the N-terminus, the 435-residue chain is Probable xyloglucan galactosyltransferase GT19 (435 aa).

Residues 1 to 6 (MASKST) lie on the Cytoplasmic side of the membrane. Residues 7-23 (VTTLTIFFFFFFFFIEP) traverse the membrane as a helical; Signal-anchor for type II membrane protein segment. Residues 24–435 (KVQSQQISAV…GVLDRIISRV (412 aa)) lie on the Lumenal side of the membrane. Residues asparagine 140, asparagine 203, and asparagine 277 are each glycosylated (N-linked (GlcNAc...) asparagine).

Belongs to the glycosyltransferase 47 family. Expressed in roots, hypocotyls, cotyledons, leaves, stems, stamens and pollen grains.

The protein localises to the golgi apparatus membrane. Functions in xyloglucan synthesis by adding side chains to the xylosylated glucan backbone. Involved in the galactosylation of hemicellulose xyloglucan. This Arabidopsis thaliana (Mouse-ear cress) protein is Probable xyloglucan galactosyltransferase GT19.